The chain runs to 316 residues: Apolipoprotein E (316 aa).

Positions 1–18 are cleaved as a signal peptide; it reads MKALWAVLVVTLLAGCLA. A run of 8 repeats spans residues 76–97, 98–119, 120–141, 142–163, 164–185, 186–207, 208–229, and 230–251. The tract at residues 76 to 251 is 8 X 22 AA approximate tandem repeats; the sequence is VLMEDTMTEL…RLEEMREQME (176 aa). Met-139 is modified (methionine sulfoxide). Ser-143 is subject to Phosphoserine. The tract at residues 154–164 is LDL and other lipoprotein receptors binding; sequence HLRKLRKRLMR. 158-161 lines the heparin pocket; the sequence is LRKR. The lipid-binding and lipoprotein association stretch occupies residues 206–286; the sequence is TANLGAGAGK…GWFEPLVEDM (81 aa). 225–232 lines the heparin pocket; sequence GARIRGRL. Residues 262-316 are homooligomerization; it reads QQMRLQAEIFQARLKGWFEPLVEDMQRQWANLVEKIQASVAANPIPPSSVPQESP. The segment at 274-286 is specificity for association with VLDL; the sequence is RLKGWFEPLVEDM.

It belongs to the apolipoprotein A1/A4/E family. In terms of assembly, homotetramer. May interact with ABCA1; functionally associated with ABCA1 in the biogenesis of HDLs. May interact with APP/A4 amyloid-beta peptide; the interaction is extremely stable in vitro but its physiological significance is unclear. May interact with MAPT. May interact with MAP2. In the cerebrospinal fluid, interacts with secreted SORL1. Interacts with PMEL; this allows the loading of PMEL luminal fragment on ILVs to induce fibril nucleation. In terms of processing, APOE exists as multiple glycosylated and sialylated glycoforms within cells and in plasma. The extent of glycosylation and sialylation are tissue and context specific. Glycated in plasma VLDL. Post-translationally, phosphorylated by FAM20C in the extracellular medium.

It localises to the secreted. It is found in the extracellular space. The protein resides in the extracellular matrix. The protein localises to the extracellular vesicle. Its subcellular location is the endosome. It localises to the multivesicular body. Functionally, APOE is an apolipoprotein, a protein associating with lipid particles, that mainly functions in lipoprotein-mediated lipid transport between organs via the plasma and interstitial fluids. APOE is a core component of plasma lipoproteins and is involved in their production, conversion and clearance. Apolipoproteins are amphipathic molecules that interact both with lipids of the lipoprotein particle core and the aqueous environment of the plasma. As such, APOE associates with chylomicrons, chylomicron remnants, very low density lipoproteins (VLDL) and intermediate density lipoproteins (IDL) but shows a preferential binding to high-density lipoproteins (HDL). It also binds a wide range of cellular receptors including the LDL receptor/LDLR, the LDL receptor-related proteins LRP1, LRP2 and LRP8 and the very low-density lipoprotein receptor/VLDLR that mediate the cellular uptake of the APOE-containing lipoprotein particles. Finally, APOE also has a heparin-binding activity and binds heparan-sulfate proteoglycans on the surface of cells, a property that supports the capture and the receptor-mediated uptake of APOE-containing lipoproteins by cells. A main function of APOE is to mediate lipoprotein clearance through the uptake of chylomicrons, VLDLs, and HDLs by hepatocytes. APOE is also involved in the biosynthesis by the liver of VLDLs as well as their uptake by peripheral tissues ensuring the delivery of triglycerides and energy storage in muscle, heart and adipose tissues. By participating in the lipoprotein-mediated distribution of lipids among tissues, APOE plays a critical role in plasma and tissues lipid homeostasis. APOE is also involved in two steps of reverse cholesterol transport, the HDLs-mediated transport of cholesterol from peripheral tissues to the liver, and thereby plays an important role in cholesterol homeostasis. First, it is functionally associated with ABCA1 in the biogenesis of HDLs in tissues. Second, it is enriched in circulating HDLs and mediates their uptake by hepatocytes. APOE also plays an important role in lipid transport in the central nervous system, regulating neuron survival and sprouting. The protein is Apolipoprotein E (Apoe) of Peromyscus leucopus (White-footed mouse).